A 1229-amino-acid chain; its full sequence is DNA-directed RNA polymerase subunit beta (1229 aa).

This sequence belongs to the RNA polymerase beta chain family. As to quaternary structure, the RNAP catalytic core consists of 2 alpha, 1 beta, 1 beta' and 1 omega subunit. When a sigma factor is associated with the core the holoenzyme is formed, which can initiate transcription.

It catalyses the reaction RNA(n) + a ribonucleoside 5'-triphosphate = RNA(n+1) + diphosphate. Its function is as follows. DNA-dependent RNA polymerase catalyzes the transcription of DNA into RNA using the four ribonucleoside triphosphates as substrates. This Roseiflexus sp. (strain RS-1) protein is DNA-directed RNA polymerase subunit beta.